The following is a 277-amino-acid chain: Ribosomal RNA small subunit methyltransferase A (277 aa).

Residues Asn18, Leu20, Gly45, Glu66, Asp89, and Asn110 each contribute to the S-adenosyl-L-methionine site.

This sequence belongs to the class I-like SAM-binding methyltransferase superfamily. rRNA adenine N(6)-methyltransferase family. RsmA subfamily.

The protein localises to the cytoplasm. It carries out the reaction adenosine(1518)/adenosine(1519) in 16S rRNA + 4 S-adenosyl-L-methionine = N(6)-dimethyladenosine(1518)/N(6)-dimethyladenosine(1519) in 16S rRNA + 4 S-adenosyl-L-homocysteine + 4 H(+). In terms of biological role, specifically dimethylates two adjacent adenosines (A1518 and A1519) in the loop of a conserved hairpin near the 3'-end of 16S rRNA in the 30S particle. May play a critical role in biogenesis of 30S subunits. In Cupriavidus taiwanensis (strain DSM 17343 / BCRC 17206 / CCUG 44338 / CIP 107171 / LMG 19424 / R1) (Ralstonia taiwanensis (strain LMG 19424)), this protein is Ribosomal RNA small subunit methyltransferase A.